The chain runs to 32 residues: Toxic phospholipase A2 (32 aa).

It belongs to the phospholipase A2 family. Group III subfamily. Ca(2+) serves as cofactor.

Its subcellular location is the secreted. It localises to the nematocyst. The catalysed reaction is a 1,2-diacyl-sn-glycero-3-phosphocholine + H2O = a 1-acyl-sn-glycero-3-phosphocholine + a fatty acid + H(+). Its function is as follows. PLA2 catalyzes the calcium-dependent hydrolysis of the 2-acyl groups in 3-sn-phosphoglycerides. In Rhopilema nomadica (Mediteranean medusa), this protein is Toxic phospholipase A2.